Consider the following 140-residue polypeptide: Active regulator of SIRT1 (140 aa).

2 disordered regions span residues 1–52 (MSAS…KNKA) and 95–123 (QQVL…EGTV). The span at 108–120 (DRPAEKKEKKKPE) shows a compositional bias: basic and acidic residues.

Belongs to the AROS family. In terms of assembly, part of the small subunit (SSU) processome, composed of more than 70 proteins and the RNA chaperone small nucleolar RNA (snoRNA) U3.

Its subcellular location is the nucleus. It localises to the nucleolus. Its function is as follows. Part of the small subunit (SSU) processome, first precursor of the small eukaryotic ribosomal subunit. During the assembly of the SSU processome in the nucleolus, many ribosome biogenesis factors, an RNA chaperone and ribosomal proteins associate with the nascent pre-rRNA and work in concert to generate RNA folding, modifications, rearrangements and cleavage as well as targeted degradation of pre-ribosomal RNA by the RNA exosome. Acts as a chaperone that specifically mediates the integration of RPS19 in state post-A1. Direct regulator of SIRT1. The protein is Active regulator of SIRT1 (RPS19BP1) of Gallus gallus (Chicken).